A 246-amino-acid polypeptide reads, in one-letter code: Type III pantothenate kinase (246 aa).

6–13 (DVGNSRIK) provides a ligand contact to ATP. Substrate contacts are provided by residues Tyr93 and 100–103 (GSDR). The active-site Proton acceptor is the Asp102. ATP is bound at residue Thr125. Residue Thr175 participates in substrate binding.

It belongs to the type III pantothenate kinase family. In terms of assembly, homodimer. Requires NH4(+) as cofactor. K(+) is required as a cofactor.

The protein resides in the cytoplasm. It carries out the reaction (R)-pantothenate + ATP = (R)-4'-phosphopantothenate + ADP + H(+). It participates in cofactor biosynthesis; coenzyme A biosynthesis; CoA from (R)-pantothenate: step 1/5. Its function is as follows. Catalyzes the phosphorylation of pantothenate (Pan), the first step in CoA biosynthesis. The sequence is that of Type III pantothenate kinase from Dichelobacter nodosus (strain VCS1703A).